Reading from the N-terminus, the 72-residue chain is Putative beta-neurotoxin (72 aa).

A signal peptide spans Ile1–Cys7. The region spanning Lys9–Gly71 is the LCN-type CS-alpha/beta domain. Intrachain disulfides connect Cys19–Cys70, Cys23–Cys45, Cys31–Cys51, and Cys35–Cys53.

As to expression, expressed by the venom gland.

It localises to the secreted. Its function is as follows. Beta toxins bind voltage-independently at site-4 of sodium channels (Nav) and shift the voltage of activation toward more negative potentials thereby affecting sodium channel activation and promoting spontaneous and repetitive firing. The polypeptide is Putative beta-neurotoxin (Tityus pachyurus (Colombian scorpion)).